The following is a 564-amino-acid chain: NAD-dependent malic enzyme (564 aa).

The active-site Proton donor is Tyr104. Residue Arg157 coordinates NAD(+). Residue Lys175 is the Proton acceptor of the active site. Glu246, Asp247, and Asp270 together coordinate a divalent metal cation. The NAD(+) site is built by Asp270 and Asn417.

This sequence belongs to the malic enzymes family. Homotetramer. Mg(2+) serves as cofactor. Mn(2+) is required as a cofactor.

The enzyme catalyses (S)-malate + NAD(+) = pyruvate + CO2 + NADH. It carries out the reaction oxaloacetate + H(+) = pyruvate + CO2. This is NAD-dependent malic enzyme from Aeromonas hydrophila subsp. hydrophila (strain ATCC 7966 / DSM 30187 / BCRC 13018 / CCUG 14551 / JCM 1027 / KCTC 2358 / NCIMB 9240 / NCTC 8049).